A 654-amino-acid polypeptide reads, in one-letter code: Sphingosine kinase 2 (654 aa).

The span at 1-17 (MNGHLEAEEQQDQRPDQ) shows a compositional bias: basic and acidic residues. The tract at residues 1–28 (MNGHLEAEEQQDQRPDQELTGSWGHGPR) is disordered. A required for binding to sulfatide and phosphoinositides and for membrane localizatione region spans residues 1-175 (MNGHLEAEEQ…LPGDGEITPD (175 aa)). The Nuclear localization signal signature appears at 122 to 130 (RGRRGARRR). The DAGKc domain maps to 178-325 (PRPPRLLLLV…LDLLSVTLAS (148 aa)). ATP-binding positions include 188–190 (NPF) and 220–224 (TERQN). Residue 245-248 (SGDG) participates in substrate binding. D247 serves as the catalytic Proton donor/acceptor. Residues E252 and 277 to 279 (GSG) contribute to the ATP site. Substrate is bound at residue D344. ATP-binding residues include R351 and R357. S387 bears the Phosphoserine; by MAPK mark. S393 and S399 each carry phosphoserine. Residues 400-509 (ELTLTPDPAP…PLPTPDARVG (110 aa)) form a disordered region. Positions 416 to 425 (LHRSVSDLPL) match the Nuclear export signal motif. Phosphoserine; by PKD occurs at positions 419 and 421. Over residues 447-461 (NGGGPELAGDWGGAG) the composition is skewed to gly residues. Residues 462–482 (DAPLSPDPLLSSPPGSPKAAL) are compositionally biased toward low complexity. A Phosphoserine modification is found at S477. The residue at position 614 (T614) is a Phosphothreonine; by MAPK. Residue 622–624 (DGE) participates in ATP binding.

Interacts with histone H3. Interacts with HDAC1, HDAC2, MBD2 and SIN3A. Interacts with EEF1A1; the interaction enhances SPHK2 kinase activity. Interacts with PHB2. Mg(2+) serves as cofactor. Post-translationally, phosphorylated by PKD on Ser-419 and Ser-421 upon PMA treatment. Phosphorylation induces export from the nucleus to the cytoplasm. Phosphorylated by MAPK1 and MAPK2 at Ser-387 and Thr-614, phosphorylation is induced by agonists such as EGF and PMA and increases kinase activity. In terms of processing, cleaved by CASP1 in apoptotic cells. The truncated form is released from cells. In terms of tissue distribution, mainly expressed in adult kidney, liver, and brain. Expressed in cerebral cortex and hippocampus (at protein level). Isoform 1 is the predominant form expressed in most tissues.

The protein resides in the cytoplasm. It localises to the nucleus. It is found in the endoplasmic reticulum. Its subcellular location is the mitochondrion inner membrane. The protein localises to the lysosome membrane. The catalysed reaction is a sphingoid base + ATP = a sphingoid 1-phosphate + ADP + H(+). The enzyme catalyses sphing-4-enine + ATP = sphing-4-enine 1-phosphate + ADP + H(+). It catalyses the reaction sphinganine + ATP = sphinganine 1-phosphate + ADP + H(+). It carries out the reaction (4R)-hydroxysphinganine + ATP = (4R)-hydroxysphinganine 1-phosphate + ADP + H(+). Its activity is regulated as follows. Inhibited by sulfatide. Kinase activity is increased by phosphorylation by MAPK2 upon PMA or EGF treatments. Its function is as follows. Catalyzes the phosphorylation of sphingosine to form sphingosine-1-phosphate (SPP), a lipid mediator with both intra- and extracellular functions. Also acts on D-erythro-dihydrosphingosine, D-erythro-sphingosine and L-threo-dihydrosphingosine. Binds phosphoinositides. In contrast to prosurvival SPHK1, has a positive effect on intracellular ceramide levels, inhibits cells growth and enhances apoptosis. In mitochondria, is important for cytochrome-c oxidase assembly and mitochondrial respiration. The SPP produced in mitochondria binds PHB2 and modulates the regulation via PHB2 of complex IV assembly and respiration. In nucleus, plays a role in epigenetic regulation of gene expression. Interacts with HDAC1 and HDAC2 and, through SPP production, inhibits their enzymatic activity, preventing the removal of acetyl groups from lysine residues with histones. Up-regulates acetylation of histone H3-K9, histone H4-K5 and histone H2B-K12. In nucleus, may have an inhibitory effect on DNA synthesis and cell cycle. In mast cells, is the main regulator of SPP production which mediates calcium influx, NF-kappa-B activation, cytokine production, such as TNF and IL6, and degranulation of mast cells. In dopaminergic neurons, is involved in promoting mitochondrial functions regulating ATP and ROS levels. Also involved in the regulation of glucose and lipid metabolism. The sequence is that of Sphingosine kinase 2 from Homo sapiens (Human).